A 276-amino-acid polypeptide reads, in one-letter code: DnaJ homolog subfamily C member 27-B (276 aa).

GTP contacts are provided by residues 23 to 30 (GNAEVGKS), 71 to 75 (DMAGH), and 137 to 140 (NKID). Positions 220-276 (DSWDMLGVKPGATRDEVNKAYRKLAVLLHPDKCVAPGSEDAFKAVVNARTALLKNIK) constitute a J domain.

The protein belongs to the small GTPase superfamily. Rab family.

The protein localises to the nucleus. In terms of biological role, GTPase possibly involved in regulation of the MEK/ERK pathway. This chain is DnaJ homolog subfamily C member 27-B (dnajc27-b), found in Xenopus laevis (African clawed frog).